The following is a 52-amino-acid chain: uncharacterized protein (52 aa).

The next 2 helical transmembrane spans lie at 4–24 and 25–45; these read IIIP…ISLE and MSIV…FLFV.

The protein resides in the cell membrane. This is an uncharacterized protein from Bacillus subtilis (strain 168).